The following is a 349-amino-acid chain: MKEVYLVGYARGASGQSDEPPGSMDHQASVQRLSGEYFSLGNPSDGEALYETAAGENTLSEHTSGEHTSVEHASAEHSSTEHTSGEHASGEHTSGERATGEHTSSEHATSEHTSGEQPSGEQPSGEKSSGEQPSGEKSSGEQPSGEKSLGEQPSGEQSSGEKSSAEQTSGEQAVAEKPSGEHAVAEKPSGEQAVAERPSGEQAVAEKPLGEQAVAERPSGEQASIEKASSEQASAEQASAEQASSEQASGEKPLGEQPSGIPPSSTFSGPILNCHTCSYMNDQGKCLRGEGVCSTQNSQQCMLKKIFEGGKLQFMVQGCENMCPSMNLFSHGTRMQIICCRNQSFCNKI.

Positions 1-8 are cleaved as a signal peptide; it reads MKEVYLVG. Positions 1–265 are disordered; it reads MKEVYLVGYA…EQPSGIPPSS (265 aa). A compositionally biased stretch (basic and acidic residues) spans 63 to 114; that stretch reads TSGEHTSVEHASAEHSSTEHTSGEHASGEHTSGERATGEHTSSEHATSEHTS. Composition is skewed to polar residues over residues 117–142 and 154–171; these read QPSG…SGEQ and SGEQ…TSGE. Positions 178–189 are enriched in basic and acidic residues; that stretch reads PSGEHAVAEKPS. Residues 221 to 248 are compositionally biased toward low complexity; that stretch reads EQASIEKASSEQASAEQASAEQASSEQA. Asn-342 carries N-linked (GlcNAc...) asparagine glycosylation.

To acrosomal proteins SP-10. Testis.

It is found in the cytoplasmic vesicle. The protein localises to the secretory vesicle. The protein resides in the acrosome. The protein is Sperm acrosomal protein FSA-ACR.1 of Vulpes vulpes (Red fox).